We begin with the raw amino-acid sequence, 40 residues long: Protein P4 (40 aa).

A helical membrane pass occupies residues 10–29; sequence KYFAYGVAISAAGAILAEYV.

The protein localises to the virion membrane. In terms of biological role, may interact with the viral DNA. This Pseudoalteromonas phage PM2 (Bacteriophage PM2) protein is Protein P4 (IV).